Here is a 118-residue protein sequence, read N- to C-terminus: MAHNLALGAHGEDLAARYLTEAGMEIIDRNWRSRYGEVDLIAAEGDWLVFVEVKTRRGLGYGTPAEAVTFSKQRRIRLLAVEWLRESSRHWSRVRFDVVAIMIGHGPQPQIEHVRDAF.

It belongs to the UPF0102 family.

This is UPF0102 protein ROP_66030 from Rhodococcus opacus (strain B4).